A 324-amino-acid polypeptide reads, in one-letter code: Putative arsenical pump-driving ATPase (324 aa).

Residue 21–28 coordinates ATP; it reads GKGGVGKT.

The protein belongs to the arsA ATPase family.

The catalysed reaction is arsenite(in) + ATP + H2O = arsenite(out) + ADP + phosphate + H(+). Its function is as follows. Anion-transporting ATPase. Catalyzes the extrusion of arsenite. The polypeptide is Putative arsenical pump-driving ATPase (Methanothermobacter thermautotrophicus (strain ATCC 29096 / DSM 1053 / JCM 10044 / NBRC 100330 / Delta H) (Methanobacterium thermoautotrophicum)).